Here is a 1283-residue protein sequence, read N- to C-terminus: uncharacterized protein (1283 aa).

Residues 10-46 enclose the LDL-receptor class A domain; that stretch reads ACPPNTFTCADGSCIPSDWKGDGEKDCEDGSDEEAVT. 2 disulfides stabilise this stretch: Cys11–Cys23 and Cys18–Cys36. The interval 27 to 47 is disordered; that stretch reads DWKGDGEKDCEDGSDEEAVTG. Over residues 34–45 the composition is skewed to acidic residues; that stretch reads KDCEDGSDEEAV. A glycan (N-linked (GlcNAc...) asparagine) is linked at Asn79. The tract at residues 236-278 is disordered; it reads STTLIVDETTESTSASAEDDDDDVLTTNTSEESTATTAHDEEV. Positions 261–272 are enriched in low complexity; the sequence is TTNTSEESTATT. A coiled-coil region spans residues 332–389; the sequence is YQKTLEKEKCAIRNATSKCEALISYNNNLDCAIVTMNDECEVDAQNLVVELQEEVNDL. Disordered regions lie at residues 621-651 and 1005-1046; these read ARPT…VASS and SSST…PTDG. The span at 626–647 shows a compositional bias: pro residues; the sequence is VTMPPRAPTAKPLPIPSAPTPP. A compositionally biased stretch (low complexity) spans 1005 to 1015; sequence SSSTMVSTSSE. Over residues 1016–1026 the composition is skewed to acidic residues; it reads SDSESAPEQET. The span at 1027-1044 shows a compositional bias: low complexity; sequence EPTVPSTTETTESPSTPT. Residues 1263 to 1283 form a helical membrane-spanning segment; the sequence is VQSSVSFHIILAALIPFFALF.

It is found in the membrane. This is an uncharacterized protein from Caenorhabditis elegans.